Reading from the N-terminus, the 508-residue chain is Steroid 17-alpha-hydroxylase/17,20 lyase (508 aa).

Asparagine 202 serves as a coordination point for substrate. Residue cysteine 442 coordinates heme.

This sequence belongs to the cytochrome P450 family. Heme is required as a cofactor.

It is found in the endoplasmic reticulum membrane. The protein localises to the microsome membrane. The catalysed reaction is a C21-steroid + reduced [NADPH--hemoprotein reductase] + O2 = a 17alpha-hydroxy-C21-steroid + oxidized [NADPH--hemoprotein reductase] + H2O + H(+). The enzyme catalyses progesterone + reduced [NADPH--hemoprotein reductase] + O2 = 17alpha-hydroxyprogesterone + oxidized [NADPH--hemoprotein reductase] + H2O + H(+). It carries out the reaction pregnenolone + reduced [NADPH--hemoprotein reductase] + O2 = 17alpha-hydroxypregnenolone + oxidized [NADPH--hemoprotein reductase] + H2O + H(+). It catalyses the reaction 17alpha-hydroxyprogesterone + reduced [NADPH--hemoprotein reductase] + O2 = androst-4-ene-3,17-dione + acetate + oxidized [NADPH--hemoprotein reductase] + H2O + 2 H(+). The catalysed reaction is 17alpha-hydroxyprogesterone + reduced [NADPH--hemoprotein reductase] + O2 = 16alpha,17alpha-dihydroxyprogesterone + oxidized [NADPH--hemoprotein reductase] + H2O + H(+). The enzyme catalyses 16alpha,17alpha-dihydroxyprogesterone + reduced [NADPH--hemoprotein reductase] + O2 = 6beta,16alpha,17alpha-trihydroxyprogesterone + oxidized [NADPH--hemoprotein reductase] + H2O + H(+). It carries out the reaction 17alpha-hydroxypregnenolone + reduced [NADPH--hemoprotein reductase] + O2 = 3beta-hydroxyandrost-5-en-17-one + acetate + oxidized [NADPH--hemoprotein reductase] + H2O + 2 H(+). It catalyses the reaction 16alpha,17alpha-dihydroxypregnenolone + reduced [NADPH--hemoprotein reductase] + O2 = 3beta,16alpha-dihydroxy-androst-5-en-17-one + acetate + oxidized [NADPH--hemoprotein reductase] + H2O + 2 H(+). The catalysed reaction is 3beta-hydroxyandrost-5-en-17-one + reduced [NADPH--hemoprotein reductase] + O2 = 3beta,16alpha-dihydroxy-androst-5-en-17-one + oxidized [NADPH--hemoprotein reductase] + H2O + H(+). The enzyme catalyses androst-4-ene-3,17-dione + reduced [NADPH--hemoprotein reductase] + O2 = 16alpha-hydroxyandrost-4-ene-3,17-dione + oxidized [NADPH--hemoprotein reductase] + H2O + H(+). Its pathway is steroid hormone biosynthesis. It participates in steroid biosynthesis; glucocorticoid biosynthesis. With respect to regulation, regulated predominantly by intracellular cAMP levels. The 17,20-lyase activity is stimulated by cytochrome b5, which acts as an allosteric effector increasing the Vmax of the lyase activity. Functionally, a cytochrome P450 monooxygenase involved in corticoid and androgen biosynthesis. Catalyzes 17-alpha hydroxylation of C21 steroids, which is common for both pathways. A second oxidative step, required only for androgen synthesis, involves an acyl-carbon cleavage. The 17-alpha hydroxy intermediates, as part of adrenal glucocorticoids biosynthesis pathway, are precursors of cortisol. Hydroxylates steroid hormones, pregnenolone and progesterone to form 17-alpha hydroxy metabolites, followed by the cleavage of the C17-C20 bond to form C19 steroids, dehydroepiandrosterone (DHEA) and androstenedione. Has 16-alpha hydroxylase activity. Catalyzes 16-alpha hydroxylation of 17-alpha hydroxy pregnenolone, followed by the cleavage of the C17-C20 bond to form 16-alpha-hydroxy DHEA. Also 16-alpha hydroxylates androgens, relevant for estriol synthesis. Mechanistically, uses molecular oxygen inserting one oxygen atom into a substrate, and reducing the second into a water molecule, with two electrons provided by NADPH via cytochrome P450 reductase (CPR; NADPH-ferrihemoprotein reductase). This chain is Steroid 17-alpha-hydroxylase/17,20 lyase (CYP17A1), found in Papio cynocephalus (Yellow baboon).